Consider the following 163-residue polypeptide: Cyanate hydratase (163 aa).

Catalysis depends on residues R103, E106, and S129.

It belongs to the cyanase family.

It carries out the reaction cyanate + hydrogencarbonate + 3 H(+) = NH4(+) + 2 CO2. Its function is as follows. Catalyzes the reaction of cyanate with bicarbonate to produce ammonia and carbon dioxide. The protein is Cyanate hydratase of Paracoccidioides brasiliensis (strain Pb18).